The primary structure comprises 647 residues: tRNA 5-methylaminomethyl-2-thiouridine biosynthesis bifunctional protein MnmC (647 aa).

Residues 1 to 227 are tRNA (mnm(5)s(2)U34)-methyltransferase; the sequence is MLTWKNNLTP…KREMLIGSYS (227 aa). The interval 256 to 647 is FAD-dependent cmnm(5)s(2)U34 oxidoreductase; it reads VGAGIAGTTL…ARFLYRKVRK (392 aa).

In the N-terminal section; belongs to the methyltransferase superfamily. tRNA (mnm(5)s(2)U34)-methyltransferase family. This sequence in the C-terminal section; belongs to the DAO family. FAD is required as a cofactor.

It is found in the cytoplasm. The enzyme catalyses 5-aminomethyl-2-thiouridine(34) in tRNA + S-adenosyl-L-methionine = 5-methylaminomethyl-2-thiouridine(34) in tRNA + S-adenosyl-L-homocysteine + H(+). In terms of biological role, catalyzes the last two steps in the biosynthesis of 5-methylaminomethyl-2-thiouridine (mnm(5)s(2)U) at the wobble position (U34) in tRNA. Catalyzes the FAD-dependent demodification of cmnm(5)s(2)U34 to nm(5)s(2)U34, followed by the transfer of a methyl group from S-adenosyl-L-methionine to nm(5)s(2)U34, to form mnm(5)s(2)U34. This chain is tRNA 5-methylaminomethyl-2-thiouridine biosynthesis bifunctional protein MnmC, found in Leptospira interrogans serogroup Icterohaemorrhagiae serovar copenhageni (strain Fiocruz L1-130).